The sequence spans 1154 residues: DNA-directed RNA polymerase, mitochondrial (1154 aa).

Residues 1 to 30 constitute a mitochondrion transit peptide; the sequence is MLRRKIQTYLSRSHIRRGLCGLRFFQTQRL. The tract at residues 221 to 243 is disordered; that stretch reads ESENGKDQNGDSSLKEKQPDVET. Residues 223-240 are compositionally biased toward basic and acidic residues; it reads ENGKDQNGDSSLKEKQPD. Active-site residues include Asp-821, Lys-890, and Asp-1061.

Belongs to the phage and mitochondrial RNA polymerase family.

The protein resides in the mitochondrion. It carries out the reaction RNA(n) + a ribonucleoside 5'-triphosphate = RNA(n+1) + diphosphate. DNA-dependent RNA polymerase catalyzes the transcription of DNA into RNA using the four ribonucleoside triphosphates as substrates. Combines in the mitochondrion with mitochondrial transcription factor mtf1 as a holoenzyme to recognize and initiate transcription at the core mitochondrial promoters. This is DNA-directed RNA polymerase, mitochondrial (rpo41) from Schizosaccharomyces pombe (strain 972 / ATCC 24843) (Fission yeast).